A 527-amino-acid chain; its full sequence is Baicalin-beta-D-glucuronidase (527 aa).

The signal sequence occupies residues 1–25 (MGFQVWQKGLCVLCFSLIFICGVIG). The active-site Proton donor is glutamate 212. Catalysis depends on glutamate 329, which acts as the Nucleophile.

The protein belongs to the glycosyl hydrolase 79 family. In terms of assembly, homotetramer.

The catalysed reaction is baicalin + H2O = baicalein + D-glucuronate + H(+). Its function is as follows. Beta-glucuronidase involved in the initiation of H(2)O(2) metabolism via the production of baicalein. Unable to use glycyrrhizin, gypsogenin-3-O-D-glucuronide, luteolin-7-O-D-glucoside and apigenin-7-O-D-glucoside as substrates. This is Baicalin-beta-D-glucuronidase (SGUS) from Scutellaria baicalensis (Baical skullcap).